Reading from the N-terminus, the 83-residue chain is Cytotoxin homolog 5 (83 aa).

The signal sequence occupies residues 1–21; that stretch reads MKTLLLTMVVVTIVCLDLGYT. Disulfide bonds link C24-C43, C36-C61, C65-C76, and C77-C82.

It belongs to the three-finger toxin family. Short-chain subfamily. Orphan group XV sub-subfamily. Expressed by the venom gland.

Its subcellular location is the secreted. It localises to the target cell membrane. Functionally, has low cytotoxic activity. The sequence is that of Cytotoxin homolog 5 from Naja atra (Chinese cobra).